The chain runs to 99 residues: Protein Frey (99 aa).

A helical transmembrane segment spans residues 7 to 29 (GALYPRAGLSLFLLYLVLAAVLL). The disordered stretch occupies residues 65-88 (PKHPWPRGPRPLLSRAQQRKRDGP).

Interacts with SPPL2C (via active sites); the interaction stabilizes FREY1 protein and inhibits SPPL2C proteolytic activity. Interacts with IZUMO1; the interaction retains IZUMO1 at the endoplasmic reticulum membrane and coordinates IZUMO1 complex assembly.

It localises to the endoplasmic reticulum membrane. Functionally, key regulator for male fertility expressed transiently in round spermatids where it recruits IZUMO1 at the endoplasmic reticulum (ER) membrane and coordinates the oolemmal binding multimeric complex (IZUMO1 complex) assembly. Upon complete assembly of the IZUMO1 complex, its ER retention is released, facilitating IZUMO1 complex export to the acrosome. Through the interaction with SPPL2C, inhibits its intramembrane protease activity directly accessing the catalytic center of an I-CLiP. This Ailuropoda melanoleuca (Giant panda) protein is Protein Frey.